Reading from the N-terminus, the 63-residue chain is Large ribosomal subunit protein uL29 (63 aa).

This sequence belongs to the universal ribosomal protein uL29 family.

This Shigella dysenteriae serotype 1 (strain Sd197) protein is Large ribosomal subunit protein uL29.